The chain runs to 303 residues: GTPase Era (303 aa).

In terms of domain architecture, Era-type G spans 8 to 176 (YCGFIAIVGR…ASIVRKHMPE (169 aa)). Positions 16–23 (GRPNVGKS) are G1. Residue 16–23 (GRPNVGKS) coordinates GTP. Residues 42-46 (QTTRH) form a G2 region. Residues 63 to 66 (DTPG) form a G3 region. Residues 63-67 (DTPGL) and 125-128 (NKVD) each bind GTP. The tract at residues 125–128 (NKVD) is G4. A G5 region spans residues 155-157 (ISA). The KH type-2 domain maps to 207-284 (LGEELPYSVT…HLELWVKVKS (78 aa)).

It belongs to the TRAFAC class TrmE-Era-EngA-EngB-Septin-like GTPase superfamily. Era GTPase family. In terms of assembly, monomer.

The protein resides in the cytoplasm. Its subcellular location is the cell inner membrane. An essential GTPase that binds both GDP and GTP, with rapid nucleotide exchange. Plays a role in 16S rRNA processing and 30S ribosomal subunit biogenesis and possibly also in cell cycle regulation and energy metabolism. This chain is GTPase Era, found in Yersinia enterocolitica serotype O:8 / biotype 1B (strain NCTC 13174 / 8081).